A 42-amino-acid chain; its full sequence is Daisho1 (42 aa).

Residues M1–A20 form the signal peptide. Positions E21 to P26 are cleaved as a propeptide — removed by a dipeptidylpeptidase. T41 carries the threonine amide modification.

Hemolymph (at protein level).

The protein localises to the secreted. Its function is as follows. Peptide which plays a role in the humoral immune response to a subset of filamentous fungi, including F.oxysporum and F.verticillioides. In Drosophila melanogaster (Fruit fly), this protein is Daisho1.